A 168-amino-acid polypeptide reads, in one-letter code: Fusion protein P6 (168 aa).

The next 4 membrane-spanning stretches (helical) occupy residues Ile29–Phe49, Ala52–Leu72, Phe94–Ala114, and Ala143–Ser163.

In terms of assembly, interacts with P3.

Its subcellular location is the virion membrane. In terms of biological role, mediates the fusion with the host outer membrane during virus entry into the host cell. This Pseudomonas savastanoi pv. phaseolicola (Pseudomonas syringae pv. phaseolicola) protein is Fusion protein P6 (P6).